The following is a 242-amino-acid chain: Small ribosomal subunit protein uS2 (242 aa).

The protein belongs to the universal ribosomal protein uS2 family.

This is Small ribosomal subunit protein uS2 from Neisseria meningitidis serogroup B (strain ATCC BAA-335 / MC58).